The chain runs to 805 residues: Probable inorganic carbon transporter subunit DabA (805 aa).

Zn(2+)-binding residues include Cys334, Asp336, His491, and Cys506.

It belongs to the inorganic carbon transporter (TC 9.A.2) DabA family. As to quaternary structure, forms a complex with DabB. Zn(2+) serves as cofactor.

The protein localises to the cell inner membrane. In terms of biological role, part of an energy-coupled inorganic carbon pump. The protein is Probable inorganic carbon transporter subunit DabA of Ruegeria sp. (strain TM1040) (Silicibacter sp.).